We begin with the raw amino-acid sequence, 239 residues long: Pyridoxine 5'-phosphate synthase (239 aa).

Position 7 (asparagine 7) interacts with 3-amino-2-oxopropyl phosphate. A 1-deoxy-D-xylulose 5-phosphate-binding site is contributed by 9–10; the sequence is DH. Arginine 18 serves as a coordination point for 3-amino-2-oxopropyl phosphate. Histidine 43 functions as the Proton acceptor in the catalytic mechanism. Positions 45 and 50 each coordinate 1-deoxy-D-xylulose 5-phosphate. Glutamate 70 functions as the Proton acceptor in the catalytic mechanism. Threonine 100 lines the 1-deoxy-D-xylulose 5-phosphate pocket. The Proton donor role is filled by histidine 191. Residues glycine 192 and 213-214 contribute to the 3-amino-2-oxopropyl phosphate site; that span reads GH.

This sequence belongs to the PNP synthase family. Homooctamer; tetramer of dimers.

The protein resides in the cytoplasm. The catalysed reaction is 3-amino-2-oxopropyl phosphate + 1-deoxy-D-xylulose 5-phosphate = pyridoxine 5'-phosphate + phosphate + 2 H2O + H(+). It participates in cofactor biosynthesis; pyridoxine 5'-phosphate biosynthesis; pyridoxine 5'-phosphate from D-erythrose 4-phosphate: step 5/5. Its function is as follows. Catalyzes the complicated ring closure reaction between the two acyclic compounds 1-deoxy-D-xylulose-5-phosphate (DXP) and 3-amino-2-oxopropyl phosphate (1-amino-acetone-3-phosphate or AAP) to form pyridoxine 5'-phosphate (PNP) and inorganic phosphate. The sequence is that of Pyridoxine 5'-phosphate synthase from Trichormus variabilis (strain ATCC 29413 / PCC 7937) (Anabaena variabilis).